An 89-amino-acid polypeptide reads, in one-letter code: Small ribosomal subunit protein uS17 (89 aa).

It belongs to the universal ribosomal protein uS17 family. Part of the 30S ribosomal subunit.

Functionally, one of the primary rRNA binding proteins, it binds specifically to the 5'-end of 16S ribosomal RNA. This chain is Small ribosomal subunit protein uS17, found in Azoarcus sp. (strain BH72).